The sequence spans 112 residues: Elongin-C (112 aa).

This sequence belongs to the SKP1 family. In terms of assembly, heterotrimer of an A (ELOA, ELOA2 or ELOA3P), ELOB and ELOC subunit. The elongin BC complex interacts with EPOP; leading to recruit the elongin BC complex to Polycomb group (PcG) target genes, thereby restricting excessive activity of the PRC2/EED-EZH2 complex. Component of multiple cullin-RING E3 ubiquitin-protein ligase complexes composed of Elongin BC (ELOB and ELOC), a cullin (CUL2 or CUL5), a catalytic subunit (RBX1 or RNF7/RBX2), as well as a substrate adapter protein that can be either ASB2, ASB9, ASB11, KLHDC2, KLHDC3, KLHDC10, APPBP2, FEM1A, FEM1B, FEM1C, LRR1, PCMTD1, SOCS1, SOCS2, SOCS5, SPSB1, SPSB3, ELOA, VHL, WSB1, ZYG11B or RAB40C. Interacts with TMF1. As part of the Elongin BC E3 ubiquitin ligase complex; interacts with NRBP1. May form oligomers as a KLHDC2/KLHDC3-ELOB-ELOC complex; this interaction is autoinhibitory for the E3 ligase complex as the substrate-binding site of KLHDC2/KLHDC3 is blocked in the oligomer. Post-translationally, ubiquitinated by the DCX(AMBRA1) complex, leading to its degradation by the proteasome.

Its subcellular location is the nucleus. The protein operates within protein modification; protein ubiquitination. Its function is as follows. SIII, also known as elongin, is a general transcription elongation factor that increases the RNA polymerase II transcription elongation past template-encoded arresting sites. Subunit A is transcriptionally active and its transcription activity is strongly enhanced by binding to the dimeric complex of the SIII regulatory subunits B and C (elongin BC complex). In embryonic stem cells, the elongin BC complex is recruited by EPOP to Polycomb group (PcG) target genes in order generate genomic region that display both active and repressive chromatin properties, an important feature of pluripotent stem cells. In terms of biological role, core component of multiple cullin-RING-based ECS (ElonginB/C-CUL2/5-SOCS-box protein) E3 ubiquitin-protein ligase complexes, which mediate the ubiquitination of target proteins. By binding to BC-box motifs it seems to link target recruitment subunits, like VHL and members of the SOCS box family, to Cullin/RBX1 modules that activate E2 ubiquitination enzymes. Component the von Hippel-Lindau ubiquitination complex CBC(VHL). A number of ECS complexes (containing either KLHDC2, KLHDC3, KLHDC10, APPBP2, FEM1A, FEM1B or FEM1C as substrate-recognition component) are part of the DesCEND (destruction via C-end degrons) pathway, which recognizes a C-degron located at the extreme C terminus of target proteins, leading to their ubiquitination and degradation. The ECS(ASB9) complex mediates ubiquitination and degradation of CKB. As part of a multisubunit ubiquitin ligase complex, polyubiquitinates monoubiquitinated POLR2A. ECS(LRR1) ubiquitinates MCM7 and promotes CMG replisome disassembly by VCP and chromatin extraction during S-phase. As part of the ECS(RAB40C) complex, mediates ANKRD28 ubiquitination and degradation, thereby inhibiting protein phosphatase 6 (PP6) complex activity and focal adhesion assembly during cell migration. In Bos taurus (Bovine), this protein is Elongin-C (ELOC).